A 533-amino-acid polypeptide reads, in one-letter code: CTP synthase (533 aa).

An amidoligase domain region spans residues M1 to L265. S13 serves as a coordination point for CTP. UTP is bound at residue S13. Position 14-19 (G14–I19) interacts with ATP. Y54 serves as a coordination point for L-glutamine. D71 lines the ATP pocket. Mg(2+) is bound by residues D71 and E139. CTP is bound by residues D146–E148, K186–Q191, and K222. Residues K186–Q191 and K222 contribute to the UTP site. Positions E290–G532 constitute a Glutamine amidotransferase type-1 domain. G351 is an L-glutamine binding site. Residue C378 is the Nucleophile; for glutamine hydrolysis of the active site. L-glutamine is bound by residues F379–Q382, E402, and R459. Active-site residues include H505 and E507.

It belongs to the CTP synthase family. In terms of assembly, homotetramer.

The enzyme catalyses UTP + L-glutamine + ATP + H2O = CTP + L-glutamate + ADP + phosphate + 2 H(+). The catalysed reaction is L-glutamine + H2O = L-glutamate + NH4(+). It carries out the reaction UTP + NH4(+) + ATP = CTP + ADP + phosphate + 2 H(+). It participates in pyrimidine metabolism; CTP biosynthesis via de novo pathway; CTP from UDP: step 2/2. Allosterically activated by GTP, when glutamine is the substrate; GTP has no effect on the reaction when ammonia is the substrate. The allosteric effector GTP functions by stabilizing the protein conformation that binds the tetrahedral intermediate(s) formed during glutamine hydrolysis. Inhibited by the product CTP, via allosteric rather than competitive inhibition. Functionally, catalyzes the ATP-dependent amination of UTP to CTP with either L-glutamine or ammonia as the source of nitrogen. Regulates intracellular CTP levels through interactions with the four ribonucleotide triphosphates. This chain is CTP synthase, found in Thermococcus gammatolerans (strain DSM 15229 / JCM 11827 / EJ3).